The sequence spans 538 residues: Transmembrane protein 266 (538 aa).

The Cytoplasmic segment spans residues 1–102 (MALVTSFNMA…VFLLSASLNS (102 aa)). A helical membrane pass occupies residues 103-123 (FLVACVILVVILLTLELLIDT). Residues 124–130 (KLLQFSN) lie on the Extracellular side of the membrane. Residues 131–151 (AFQFAGVIHWISLVILSVFFS) traverse the membrane as a helical segment. Over 152–169 (ETVLRIVVLGIWDYIENK) the chain is Cytoplasmic. The chain crosses the membrane as a helical span at residues 170–190 (IEVFDGAVIILSLAPMVASTV). Residues 191–199 (ANGPRSPWD) are Extracellular-facing. Residues 200-220 (AISLIIMFRIWRVKRVIDAYV) traverse the membrane as a helical segment. The Cytoplasmic portion of the chain corresponds to 221 to 538 (LPVKLEMEMV…EPKLHTVPEA (318 aa)). A coiled-coil region spans residues 232–278 (QQYEKAKAIQDEQLERLTQICQEQGFEIRQLRAHLAQQDLDLAAERE). 2 disordered regions span residues 380 to 435 (NSTC…PLPL) and 453 to 483 (SSLSKDPCPSHKALDPAPLAQPTPLGSVQTS). Residues 381-396 (STCASATSETTSHSTC) are compositionally biased toward low complexity. The segment covering 397-417 (GSVTRAQSASSQTLGSSTDCS) has biased composition (polar residues). Positions 425 to 434 (PSKPRSSPLP) are enriched in low complexity.

In terms of assembly, homodimer; disulfide-linked. As to expression, in brain, present in the granule layer of the cerebellar cortex. Localizes on the post-synaptic side of glutamatergic mossy fibers and granule cells in the cerebellum (at protein level). Predominantly expressed in granule cells in cerebellum (at protein level).

It localises to the cell projection. The protein resides in the dendrite. Its subcellular location is the perikaryon. It is found in the cell membrane. In terms of biological role, voltage-sensor protein present on the post-synaptic side of glutamatergic mossy fibers and granule cells in the cerebellum. Despite the presence of a voltage-sensor segment, does not form a functional ion channel and its precise role remains unclear. Undergoes both rapid and slow structural rearrangements in response to changes in voltage. Contains a zinc-binding site that can regulate the slow conformational transition. The sequence is that of Transmembrane protein 266 from Mus musculus (Mouse).